The primary structure comprises 473 residues: Ribulose bisphosphate carboxylase large chain (473 aa).

Positions 1–2 (MS) are excised as a propeptide. Position 3 is an N-acetylproline (Pro3). Lys14 is modified (N6,N6,N6-trimethyllysine). 2 residues coordinate substrate: Asn123 and Thr173. The Proton acceptor role is filled by Lys175. Lys177 serves as a coordination point for substrate. Mg(2+)-binding residues include Lys201, Asp203, and Glu204. Lys201 carries the post-translational modification N6-carboxylysine. The active-site Proton acceptor is the His294. Substrate is bound by residues Arg295, His327, and Ser379.

This sequence belongs to the RuBisCO large chain family. Type I subfamily. In terms of assembly, heterohexadecamer of 8 large chains and 8 small chains; disulfide-linked. The disulfide link is formed within the large subunit homodimers. It depends on Mg(2+) as a cofactor. The disulfide bond which can form in the large chain dimeric partners within the hexadecamer appears to be associated with oxidative stress and protein turnover.

The protein localises to the plastid. It is found in the chloroplast. It carries out the reaction 2 (2R)-3-phosphoglycerate + 2 H(+) = D-ribulose 1,5-bisphosphate + CO2 + H2O. It catalyses the reaction D-ribulose 1,5-bisphosphate + O2 = 2-phosphoglycolate + (2R)-3-phosphoglycerate + 2 H(+). Functionally, ruBisCO catalyzes two reactions: the carboxylation of D-ribulose 1,5-bisphosphate, the primary event in carbon dioxide fixation, as well as the oxidative fragmentation of the pentose substrate in the photorespiration process. Both reactions occur simultaneously and in competition at the same active site. The protein is Ribulose bisphosphate carboxylase large chain of Sesbania sesban (Egyptian riverhemp).